The chain runs to 20 residues: Unknown protein NF007 from 2D-PAGE (20 aa).

The protein is Unknown protein NF007 from 2D-PAGE of Naegleria fowleri (Brain eating amoeba).